The primary structure comprises 2193 residues: Genome polyprotein (2193 aa).

The disordered stretch occupies residues 1-22 (MGSQVSTQRSGSHENSNSASEG). G2 is lipidated: N-myristoyl glycine; by host. Residues 2–1503 (GSQVSTQRSG…HLNRAVLIMQ (1502 aa)) are Cytoplasmic-facing. Amphipathic alpha-helix regions lie at residues 566–588 (GDGI…LTSL) and 568–588 (GIAD…LTSL). Active-site for protease 2A activity residues include H883 and D901. Residues C918 and C920 each contribute to the Zn(2+) site. The active-site For protease 2A activity is the C972. Zn(2+) contacts are provided by C978 and H980. Positions 1112–1184 (SASWLKKFND…EQSAASQEDL (73 aa)) are membrane-binding. Residues 1112–1250 (SASWLKKFND…SPGTGKSLAT (139 aa)) are oligomerization. The segment at 1133-1137 (SNKIS) is RNA-binding. Residues 1216-1374 (EKRMNNYMQF…YKTDLGRLDA (159 aa)) form the SF3 helicase domain. An ATP-binding site is contributed by 1240–1247 (GSPGTGKS). Zn(2+) contacts are provided by C1381, C1392, and C1397. The C4-type; degenerate zinc finger occupies 1381–1397 (CSENNTANFKRCSPLVC). The tract at residues 1424-1431 (EYNNRYAI) is RNA-binding. Residues 1435 to 1440 (IEALFQ) form an oligomerization region. An intramembrane segment occupies 1504-1519 (SIATVVAVVSLVYVIY). The Cytoplasmic portion of the chain corresponds to 1520–2193 (KLFAGFQGAY…NLRRNWLELF (674 aa)). Residue Y1529 is modified to O-(5'-phospho-RNA)-tyrosine. The 179-residue stretch at 1549–1727 (GPSLDFALSL…FCAGLKRSYF (179 aa)) folds into the Peptidase C3 domain. Active-site for protease 3C activity residues include H1588, E1619, and C1695. A RdRp catalytic domain is found at 1958–2073 (GSLFAFDYSG…ASYPFPIDCL (116 aa)). Residues D1964 and D2060 each contribute to the Mg(2+) site.

It belongs to the picornaviruses polyprotein family. In terms of assembly, interacts with capsid protein VP1 and capsid protein VP3 to form heterotrimeric protomers. As to quaternary structure, interacts with capsid protein VP0, and capsid protein VP3 to form heterotrimeric protomers. Five protomers subsequently associate to form pentamers which serve as building blocks for the capsid. Interacts with capsid protein VP2, capsid protein VP3 and capsid protein VP4 following cleavage of capsid protein VP0. Interacts with capsid protein VP1 and capsid protein VP3 in the mature capsid. In terms of assembly, interacts with capsid protein VP0 and capsid protein VP1 to form heterotrimeric protomers. Five protomers subsequently associate to form pentamers which serve as building blocks for the capsid. Interacts with capsid protein VP4 in the mature capsid. Interacts with protein 2C; this interaction may be important for virion morphogenesis. As to quaternary structure, interacts with capsid protein VP1 and capsid protein VP3. Homodimer. In terms of assembly, homohexamer; forms a hexameric ring structure with 6-fold symmetry characteristic of AAA+ ATPases. Interacts (via N-terminus) with host RTN3 (via reticulon domain); this interaction is important for viral replication. Interacts with capsid protein VP3; this interaction may be important for virion morphogenesis. As to quaternary structure, interacts with protein 3CD. Homodimer. Interacts with host GBF1. Interacts (via GOLD domain) with host ACBD3 (via GOLD domain); this interaction allows the formation of a viral protein 3A/ACBD3 heterotetramer with a 2:2 stoichiometry, which will stimulate the recruitment of host PI4KB in order to synthesize PI4P at the viral RNA replication sites. In terms of assembly, interacts with RNA-directed RNA polymerase. As to quaternary structure, interacts with host IFIH1/MDA5; this interaction inhibits host IFIH1. Interacts with protein 3AB and with RNA-directed RNA polymerase. In terms of assembly, interacts with Viral protein genome-linked and with protein 3CD. Requires Mg(2+) as cofactor. Post-translationally, specific enzymatic cleavages in vivo by the viral proteases yield processing intermediates and the mature proteins. Myristoylation is required for the formation of pentamers during virus assembly. Further assembly of 12 pentamers and a molecule of genomic RNA generates the provirion. In terms of processing, during virion maturation, immature virions are rendered infectious following cleavage of VP0 into VP4 and VP2. This maturation seems to be an autocatalytic event triggered by the presence of RNA in the capsid and it is followed by a conformational change infectious virion. Post-translationally, myristoylation is required during RNA encapsidation and formation of the mature virus particle. VPg is uridylylated by the polymerase into VPg-pUpU. This acts as a nucleotide-peptide primer for the genomic RNA replication.

Its subcellular location is the virion. The protein resides in the host cytoplasm. It is found in the host cytoplasmic vesicle membrane. It localises to the host nucleus. The catalysed reaction is a ribonucleoside 5'-triphosphate + H2O = a ribonucleoside 5'-diphosphate + phosphate + H(+). It catalyses the reaction Selective cleavage of Tyr-|-Gly bond in the picornavirus polyprotein.. The enzyme catalyses RNA(n) + a ribonucleoside 5'-triphosphate = RNA(n+1) + diphosphate. It carries out the reaction Selective cleavage of Gln-|-Gly bond in the poliovirus polyprotein. In other picornavirus reactions Glu may be substituted for Gln, and Ser or Thr for Gly.. Replication or transcription is subject to high level of random mutations by the nucleotide analog ribavirin. Its function is as follows. Forms an icosahedral capsid of pseudo T=3 symmetry with capsid proteins VP2 and VP3. The capsid is 300 Angstroms in diameter, composed of 60 copies of each capsid protein and enclosing the viral positive strand RNA genome. Capsid protein VP1 mainly forms the vertices of the capsid. Capsid protein VP1 interacts with host cell receptor to provide virion attachment to target host cells. This attachment induces virion internalization. After binding to its receptor, the capsid undergoes conformational changes. Capsid protein VP1 N-terminus (that contains an amphipathic alpha-helix) and capsid protein VP4 are externalized. Together, they shape a pore in the host membrane through which viral genome is translocated to host cell cytoplasm. Functionally, forms an icosahedral capsid of pseudo T=3 symmetry with capsid proteins VP2 and VP3. The capsid is 300 Angstroms in diameter, composed of 60 copies of each capsid protein and enclosing the viral positive strand RNA genome. Lies on the inner surface of the capsid shell. After binding to the host receptor, the capsid undergoes conformational changes. Capsid protein VP4 is released, Capsid protein VP1 N-terminus is externalized, and together, they shape a pore in the host membrane through which the viral genome is translocated into the host cell cytoplasm. In terms of biological role, component of immature procapsids, which is cleaved into capsid proteins VP4 and VP2 after maturation. Allows the capsid to remain inactive before the maturation step. Its function is as follows. Cysteine protease that cleaves viral polyprotein and specific host proteins. It is responsible for the autocatalytic cleavage between the P1 and P2 regions, which is the first cleavage occurring in the polyprotein. Also cleaves the host translation initiation factor EIF4G1, in order to shut down the capped cellular mRNA translation. Inhibits the host nucleus-cytoplasm protein and RNA trafficking by cleaving host members of the nuclear pores. Counteracts stress granule formation probably by antagonizing its assembly or promoting its dissassembly. Cleaves and inhibits host IFIH1/MDA5, thereby inhibiting the type-I IFN production and the establishment of the antiviral state. Cleaves and inhibits host MAVS, thereby inhibiting the type-I IFN production and the establishment of the antiviral state. Functionally, plays an essential role in the virus replication cycle by acting as a viroporin. Creates a pore in the host endoplasmic reticulum and as a consequence releases Ca2+ in the cytoplasm of infected cell. In turn, high levels of cytoplasmic calcium may trigger membrane trafficking and transport of viral ER-associated proteins to viroplasms, sites of viral genome replication. Induces and associates with structural rearrangements of intracellular membranes. Displays RNA-binding, nucleotide binding and NTPase activities. May play a role in virion morphogenesis and viral RNA encapsidation by interacting with the capsid protein VP3. In terms of biological role, localizes the viral replication complex to the surface of membranous vesicles. Together with protein 3CD binds the Cis-Active RNA Element (CRE) which is involved in RNA synthesis initiation. Acts as a cofactor to stimulate the activity of 3D polymerase, maybe through a nucleid acid chaperone activity. Its function is as follows. Localizes the viral replication complex to the surface of membranous vesicles. It inhibits host cell endoplasmic reticulum-to-Golgi apparatus transport and causes the disassembly of the Golgi complex, possibly through GBF1 interaction. This would result in depletion of MHC, trail receptors and IFN receptors at the host cell surface. Plays an essential role in viral RNA replication by recruiting ACBD3 and PI4KB at the viral replication sites, thereby allowing the formation of the rearranged membranous structures where viral replication takes place. Functionally, acts as a primer for viral RNA replication and remains covalently bound to viral genomic RNA. VPg is uridylylated prior to priming replication into VPg-pUpU. The oriI viral genomic sequence may act as a template for this. The VPg-pUpU is then used as primer on the genomic RNA poly(A) by the RNA-dependent RNA polymerase to replicate the viral genome. During genome replication, the VPg-RNA linkage is removed by the host TDP2, thereby accelerating replication. During the late stage of the replication cycle, host TDP2 is excluded from sites of viral RNA synthesis and encapsidation, allowing for the generation of progeny virions. Involved in the viral replication complex and viral polypeptide maturation. It exhibits protease activity with a specificity and catalytic efficiency that is different from protease 3C. Protein 3CD lacks polymerase activity. Protein 3CD binds to the 5'UTR of the viral genome. In terms of biological role, major viral protease that mediates proteolytic processing of the polyprotein. Cleaves host EIF5B, contributing to host translation shutoff. Also cleaves host PABPC1, contributing to host translation shutoff. Binds and inhibits host IFIH1/MDA5, thereby inhibiting the type-I IFN production and the establishment of the antiviral state. Cleaves host MAP3K7/TAK1, resulting in inhibition of TRAF6-triggered NF-kappa-B induction. Cleaves host NLRP1, triggers host N-glycine-mediated degradation of the autoinhibitory NLRP1 N-terminal fragment. Its function is as follows. Replicates the viral genomic RNA on the surface of intracellular membranes. May form linear arrays of subunits that propagate along a strong head-to-tail interaction called interface-I. Covalently attaches UMP to a tyrosine of VPg, which is used to prime RNA synthesis. The positive stranded RNA genome is first replicated at virus induced membranous vesicles, creating a dsRNA genomic replication form. This dsRNA is then used as template to synthesize positive stranded RNA genomes. ss(+)RNA genomes are either translated, replicated or encapsidated. The sequence is that of Genome polyprotein from Homo sapiens (Human).